Reading from the N-terminus, the 105-residue chain is Pyruvate synthase subunit PorD (105 aa).

4Fe-4S ferredoxin-type domains lie at 44-73 (FKPE…LDEE) and 74-103 (GYPV…MVRE). Positions 53, 56, 59, 63, 83, 86, 89, and 93 each coordinate [4Fe-4S] cluster.

Heterotetramer of one alpha, one beta, one delta and one gamma chain. The cofactor is [4Fe-4S] cluster.

The polypeptide is Pyruvate synthase subunit PorD (porD) (Pyrococcus furiosus (strain ATCC 43587 / DSM 3638 / JCM 8422 / Vc1)).